The sequence spans 161 residues: RNA pyrophosphohydrolase (161 aa).

The Nudix hydrolase domain occupies 12–154 (PYRPGVGMMI…KRKLYQAVVK (143 aa)). A Nudix box motif is present at residues 46–67 (GGIVPGETPSIAAMREMLEEIG).

The protein belongs to the Nudix hydrolase family. RppH subfamily. It depends on a divalent metal cation as a cofactor.

In terms of biological role, accelerates the degradation of transcripts by removing pyrophosphate from the 5'-end of triphosphorylated RNA, leading to a more labile monophosphorylated state that can stimulate subsequent ribonuclease cleavage. This chain is RNA pyrophosphohydrolase, found in Rickettsia bellii (strain OSU 85-389).